A 280-amino-acid chain; its full sequence is 2-dehydro-3-deoxyphosphooctonate aldolase (280 aa).

It belongs to the KdsA family.

It is found in the cytoplasm. It carries out the reaction D-arabinose 5-phosphate + phosphoenolpyruvate + H2O = 3-deoxy-alpha-D-manno-2-octulosonate-8-phosphate + phosphate. It functions in the pathway carbohydrate biosynthesis; 3-deoxy-D-manno-octulosonate biosynthesis; 3-deoxy-D-manno-octulosonate from D-ribulose 5-phosphate: step 2/3. It participates in bacterial outer membrane biogenesis; lipopolysaccharide biosynthesis. This is 2-dehydro-3-deoxyphosphooctonate aldolase from Neisseria meningitidis serogroup C / serotype 2a (strain ATCC 700532 / DSM 15464 / FAM18).